We begin with the raw amino-acid sequence, 160 residues long: SsrA-binding protein (160 aa).

The disordered stretch occupies residues 135–160 (KTHDKRETIKERDWKREQSRILRDRG). Basic and acidic residues predominate over residues 138–160 (DKRETIKERDWKREQSRILRDRG).

Belongs to the SmpB family.

It is found in the cytoplasm. Functionally, required for rescue of stalled ribosomes mediated by trans-translation. Binds to transfer-messenger RNA (tmRNA), required for stable association of tmRNA with ribosomes. tmRNA and SmpB together mimic tRNA shape, replacing the anticodon stem-loop with SmpB. tmRNA is encoded by the ssrA gene; the 2 termini fold to resemble tRNA(Ala) and it encodes a 'tag peptide', a short internal open reading frame. During trans-translation Ala-aminoacylated tmRNA acts like a tRNA, entering the A-site of stalled ribosomes, displacing the stalled mRNA. The ribosome then switches to translate the ORF on the tmRNA; the nascent peptide is terminated with the 'tag peptide' encoded by the tmRNA and targeted for degradation. The ribosome is freed to recommence translation, which seems to be the essential function of trans-translation. This Sphingomonas elodea protein is SsrA-binding protein.